The chain runs to 421 residues: Monopolin complex subunit mde4 (421 aa).

2 disordered regions span residues 122 to 158 (QKSNPEKHEDAVSQNRLRGSLDTVSSPSKTHKANKDE) and 224 to 316 (DRKL…MTVS). The segment covering 133–149 (VSQNRLRGSLDTVSSPS) has biased composition (polar residues). Residues 224 to 238 (DRKLRMQKKSTERKS) show a composition bias toward basic and acidic residues. A compositionally biased stretch (polar residues) spans 262–287 (RQPNATSGSPLSVTPFLQKTSTSIGL). Residues 288–304 (SSSPPQSSPSAQSSQPF) are compositionally biased toward low complexity.

In terms of assembly, component of a monopolin-like complex composed of pcs1 and mde4. The complex associates with the kinetochore.

The protein localises to the nucleus. The protein resides in the chromosome. Its subcellular location is the centromere. In terms of biological role, the monopolin-like pcs1/mde4 complex is essential for accurate chromosome segregation during mitosis and meiosis II. May clamp together microtubule binding sites on the same kinetochore, preventing merotelic attachment of microtubules. This chain is Monopolin complex subunit mde4 (mde4), found in Schizosaccharomyces pombe (strain 972 / ATCC 24843) (Fission yeast).